Consider the following 195-residue polypeptide: 7-methyl-GTP pyrophosphatase (195 aa).

The Proton acceptor role is filled by Asp70.

Belongs to the Maf family. YceF subfamily. A divalent metal cation is required as a cofactor.

The protein resides in the cytoplasm. The catalysed reaction is N(7)-methyl-GTP + H2O = N(7)-methyl-GMP + diphosphate + H(+). Functionally, nucleoside triphosphate pyrophosphatase that hydrolyzes 7-methyl-GTP (m(7)GTP). May have a dual role in cell division arrest and in preventing the incorporation of modified nucleotides into cellular nucleic acids. The chain is 7-methyl-GTP pyrophosphatase from Shewanella sp. (strain MR-7).